A 209-amino-acid chain; its full sequence is Uracil phosphoribosyltransferase (209 aa).

Residues R79, R104, and 131–139 (DPMLATGGS) each bind 5-phospho-alpha-D-ribose 1-diphosphate. Uracil is bound by residues I194 and 199–201 (GDA). 5-phospho-alpha-D-ribose 1-diphosphate is bound at residue D200.

It belongs to the UPRTase family. The cofactor is Mg(2+).

It catalyses the reaction UMP + diphosphate = 5-phospho-alpha-D-ribose 1-diphosphate + uracil. Its pathway is pyrimidine metabolism; UMP biosynthesis via salvage pathway; UMP from uracil: step 1/1. With respect to regulation, allosterically activated by GTP. Catalyzes the conversion of uracil and 5-phospho-alpha-D-ribose 1-diphosphate (PRPP) to UMP and diphosphate. The chain is Uracil phosphoribosyltransferase from Lacticaseibacillus paracasei (strain ATCC 334 / BCRC 17002 / CCUG 31169 / CIP 107868 / KCTC 3260 / NRRL B-441) (Lactobacillus paracasei).